We begin with the raw amino-acid sequence, 415 residues long: Serine hydroxymethyltransferase 1 (415 aa).

(6S)-5,6,7,8-tetrahydrofolate-binding positions include leucine 122 and 126–128; that span reads GHL. Lysine 230 is modified (N6-(pyridoxal phosphate)lysine).

The protein belongs to the SHMT family. In terms of assembly, homodimer. It depends on pyridoxal 5'-phosphate as a cofactor.

It is found in the cytoplasm. It carries out the reaction (6R)-5,10-methylene-5,6,7,8-tetrahydrofolate + glycine + H2O = (6S)-5,6,7,8-tetrahydrofolate + L-serine. It participates in one-carbon metabolism; tetrahydrofolate interconversion. It functions in the pathway amino-acid biosynthesis; glycine biosynthesis; glycine from L-serine: step 1/1. Its function is as follows. Catalyzes the reversible interconversion of serine and glycine with tetrahydrofolate (THF) serving as the one-carbon carrier. This reaction serves as the major source of one-carbon groups required for the biosynthesis of purines, thymidylate, methionine, and other important biomolecules. Also exhibits THF-independent aldolase activity toward beta-hydroxyamino acids, producing glycine and aldehydes, via a retro-aldol mechanism. In Ralstonia nicotianae (strain ATCC BAA-1114 / GMI1000) (Ralstonia solanacearum), this protein is Serine hydroxymethyltransferase 1.